The following is a 219-amino-acid chain: Interleukin-12 subunit alpha (219 aa).

A signal peptide spans 1 to 22 (MCPARSLLLVATLVLLDYLSLA). 3 N-linked (GlcNAc...) asparagine glycosylation sites follow: Asn-24, Asn-93, and Asn-107. 3 disulfide bridges follow: Cys-37/Cys-110, Cys-64/Cys-196, and Cys-85/Cys-123.

The protein belongs to the IL-6 superfamily. As to quaternary structure, heterodimer with IL12B; disulfide-linked. This heterodimer is known as interleukin IL-12. Heterodimer with EBI3/IL27B; not disulfide-linked. This heterodimer is known as interleukin IL-35. Interacts with NBR1; this interaction promotes IL-12 secretion.

Its subcellular location is the secreted. Heterodimerizes with IL12B to form the IL-12 cytokine or with EBI3/IL27B to form the IL-35 cytokine. IL-12 is primarily produced by professional antigen-presenting cells (APCs) such as B-cells and dendritic cells (DCs) as well as macrophages and granulocytes and regulates T-cell and natural killer-cell responses, induces the production of interferon-gamma (IFN-gamma), favors the differentiation of T-helper 1 (Th1) cells and is an important link between innate resistance and adaptive immunity. Mechanistically, exerts its biological effects through a receptor composed of IL12R1 and IL12R2 subunits. Binding to the receptor results in the rapid tyrosine phosphorylation of a number of cellular substrates including the JAK family kinases TYK2 and JAK2. In turn, recruited STAT4 gets phosphorylated and translocates to the nucleus where it regulates cytokine/growth factor responsive genes. As part of IL-35, plays essential roles in maintaining the immune homeostasis of the liver microenvironment and also functions as an immune-suppressive cytokine. Mediates biological events through unconventional receptors composed of IL12RB2 and gp130/IL6ST heterodimers or homodimers. Signaling requires the transcription factors STAT1 and STAT4, which form a unique heterodimer that binds to distinct DNA sites. The protein is Interleukin-12 subunit alpha (IL12A) of Macaca mulatta (Rhesus macaque).